The primary structure comprises 726 residues: E3 SUMO-protein ligase SIZ2 (726 aa).

An SAP domain is found at 43–77 (MEQLKVLELKQICKSLDLSITGKKAVLQDRIKQFL). In terms of domain architecture, PINIT spans 139–291 (TALPPYSQQQ…SISCFIVEVF (153 aa)). An SP-RING-type zinc finger spans residues 323–408 (DDDDIITTST…IQNCNEDVEQ (86 aa)). Positions 354, 356, 377, and 380 each coordinate Zn(2+). A disordered region spans residues 507–533 (PSESEGSSDYNPNHTSTPKGSPTMDQD). Residues 510–533 (SEGSSDYNPNHTSTPKGSPTMDQD) are compositionally biased toward polar residues.

It belongs to the PIAS family. In terms of assembly, interacts with CDC12. Autosumoylated upon ethanol stress.

The protein resides in the nucleus. It participates in protein modification; protein sumoylation. Its function is as follows. May act as an E3 ligase mediating SUMO/Smt3 attachment to septins. May be involved in chromosome maintenance. The polypeptide is E3 SUMO-protein ligase SIZ2 (NFI1) (Saccharomyces cerevisiae (strain ATCC 204508 / S288c) (Baker's yeast)).